The chain runs to 439 residues: Probable glycine dehydrogenase (decarboxylating) subunit 1 (439 aa).

It belongs to the GcvP family. N-terminal subunit subfamily. In terms of assembly, the glycine cleavage system is composed of four proteins: P, T, L and H. In this organism, the P 'protein' is a heterodimer of two subunits.

It carries out the reaction N(6)-[(R)-lipoyl]-L-lysyl-[glycine-cleavage complex H protein] + glycine + H(+) = N(6)-[(R)-S(8)-aminomethyldihydrolipoyl]-L-lysyl-[glycine-cleavage complex H protein] + CO2. Functionally, the glycine cleavage system catalyzes the degradation of glycine. The P protein binds the alpha-amino group of glycine through its pyridoxal phosphate cofactor; CO(2) is released and the remaining methylamine moiety is then transferred to the lipoamide cofactor of the H protein. This chain is Probable glycine dehydrogenase (decarboxylating) subunit 1, found in Aquifex aeolicus (strain VF5).